Consider the following 265-residue polypeptide: MEMO1 family protein Mbar_A1422 (265 aa).

The protein belongs to the MEMO1 family.

In Methanosarcina barkeri (strain Fusaro / DSM 804), this protein is MEMO1 family protein Mbar_A1422.